Consider the following 579-residue polypeptide: Nuclear hormone receptor family member nhr-71 (579 aa).

Positions 8 to 83 (SQECMVCSAP…AGMKIGAVQP (76 aa)) form a DNA-binding region, nuclear receptor. 2 NR C4-type zinc fingers span residues 11–31 (CMVC…CRSC) and 47–71 (CKHT…FTKC). Disordered stretches follow at residues 82–124 (QPRR…SDGP) and 168–189 (EPIP…PNDD). 2 stretches are compositionally biased toward polar residues: residues 106–124 (SMNN…SDGP) and 171–186 (PSTS…QSSP). The NR LBD domain occupies 189–452 (DEQQEFNHLV…KFWYETLCYA (264 aa)).

The protein belongs to the nuclear hormone receptor family.

The protein localises to the nucleus. Functionally, orphan nuclear receptor. This is Nuclear hormone receptor family member nhr-71 (nhr-71) from Caenorhabditis elegans.